Consider the following 665-residue polypeptide: Probable protein transport Sec1a (665 aa).

Residues 543–594 (PSPSFRGIPSASTQTSPAHQPAQSMRSRRTGGTWARPRDSDDGYSSDSVLKH) form a disordered region. Composition is skewed to polar residues over residues 552-567 (SAST…AQSM) and 585-594 (GYSSDSVLKH).

This sequence belongs to the STXBP/unc-18/SEC1 family.

In terms of biological role, involved in the vesicle trafficking. Binds syntaxins. In Oryza sativa subsp. japonica (Rice), this protein is Probable protein transport Sec1a.